The chain runs to 362 residues: Chorismate synthase (362 aa).

Residues R48 and R54 each contribute to the NADP(+) site. Residues 131–133 (RSS), 243–244 (NA), G287, 302–306 (KPTSS), and R328 each bind FMN.

It belongs to the chorismate synthase family. In terms of assembly, homotetramer. The cofactor is FMNH2.

The enzyme catalyses 5-O-(1-carboxyvinyl)-3-phosphoshikimate = chorismate + phosphate. Its pathway is metabolic intermediate biosynthesis; chorismate biosynthesis; chorismate from D-erythrose 4-phosphate and phosphoenolpyruvate: step 7/7. In terms of biological role, catalyzes the anti-1,4-elimination of the C-3 phosphate and the C-6 proR hydrogen from 5-enolpyruvylshikimate-3-phosphate (EPSP) to yield chorismate, which is the branch point compound that serves as the starting substrate for the three terminal pathways of aromatic amino acid biosynthesis. This reaction introduces a second double bond into the aromatic ring system. In Rhodopseudomonas palustris (strain ATCC BAA-98 / CGA009), this protein is Chorismate synthase.